Reading from the N-terminus, the 146-residue chain is 3-dehydroquinate dehydratase (146 aa).

Tyr23 acts as the Proton acceptor in catalysis. Asn79, His85, and Asp92 together coordinate substrate. The active-site Proton donor is the His105. Residues 106–107 (IS) and Arg116 each bind substrate.

It belongs to the type-II 3-dehydroquinase family. As to quaternary structure, homododecamer.

The enzyme catalyses 3-dehydroquinate = 3-dehydroshikimate + H2O. It participates in metabolic intermediate biosynthesis; chorismate biosynthesis; chorismate from D-erythrose 4-phosphate and phosphoenolpyruvate: step 3/7. Catalyzes a trans-dehydration via an enolate intermediate. This chain is 3-dehydroquinate dehydratase, found in Variovorax paradoxus (strain S110).